A 185-amino-acid chain; its full sequence is DNA-directed RNA polymerase 22 kDa subunit (185 aa).

It belongs to the poxviridae DNA-directed RNA polymerase 22 kDa subunit family. As to quaternary structure, the DNA-dependent RNA polymerase used for intermediate and late genes expression consists of eight subunits Rpo30/OPG66, Rpo7/OPG90, Rpo22/OPG103, Rpo147/OPG105, Rpo18/OPG119, Rpo19/OPG131, Rpo132/OPG151 and Rpo35/OPG156. The same holoenzyme, with the addition of the transcription-specificity factor OPG109, is used for early gene expression.

It localises to the virion. The enzyme catalyses RNA(n) + a ribonucleoside 5'-triphosphate = RNA(n+1) + diphosphate. In terms of biological role, part of the DNA-dependent RNA polymerase which catalyzes the transcription of viral DNA into RNA using the four ribonucleoside triphosphates as substrates. Responsible for the transcription of early, intermediate and late genes. DNA-dependent RNA polymerase associates with the early transcription factor (ETF), itself composed of OPG118 and OPG133, thereby allowing the early genes transcription. Late transcription, and probably also intermediate transcription, require newly synthesized RNA polymerase. The polypeptide is DNA-directed RNA polymerase 22 kDa subunit (OPG103) (Cynomys gunnisoni (Gunnison's prairie dog)).